A 984-amino-acid polypeptide reads, in one-letter code: Vacuolar sorting protein 3 (984 aa).

Residues 21–339 enclose the CNH domain; that stretch reads KIRALSLSPI…GCGPSLLAAD (319 aa). Residues 663–844 form a CHCR repeat; it reads VLTSDKRTEE…YLDPQNGKEP (182 aa).

This sequence belongs to the TRAP1 family. Component of the class C core vacuole/endosome tethering (CORVET) complex. Their common core is composed of the class C Vps core proteins VPS11, VCL1, VPS18 and VPS33, which in CORVET further associates with VPS3. Interacts directly with VPS11. Binds to RABF2A and RABF2B.

It is found in the endosome membrane. The protein resides in the cytoplasm. In terms of biological role, essential protein required during embryogenesis. Believed to act as a component of the putative class C core vacuole/endosome tethering (CORVET) endosomal tethering complexes. CORVET is required for vacuolar transport of SYP22. Involved in root development. Plays a role in vesicle-mediated protein trafficking of the endocytic membrane transport pathway. The sequence is that of Vacuolar sorting protein 3 from Arabidopsis thaliana (Mouse-ear cress).